Reading from the N-terminus, the 451-residue chain is Lipase member H (451 aa).

An N-terminal signal peptide occupies residues 1–16 (MLRLCFFISFMCLVKS). N66 carries N-linked (GlcNAc...) asparagine glycosylation. Catalysis depends on S154, which acts as the Nucleophile. D178 acts as the Charge relay system in catalysis. C233 and C246 are joined by a disulfide. H248 acts as the Charge relay system in catalysis. 3 cysteine pairs are disulfide-bonded: C270–C281, C284–C292, and C427–C446.

Belongs to the AB hydrolase superfamily. Lipase family. Interacts with TTMP/C3orf52. Expressed in placenta and colon. Weakly expressed in small intestine.

Its subcellular location is the secreted. It localises to the cell membrane. The enzyme catalyses 1-hexadecanoyl-2-(9Z-octadecenoyl)-sn-glycero-3-phosphate + H2O = 2-(9Z-octadecenoyl)-sn-glycero-3-phosphate + hexadecanoate + H(+). In terms of biological role, hydrolyzes specifically phosphatidic acid (PA) to produce 2-acyl lysophosphatidic acid (LPA; a potent bioactive lipid mediator) and fatty acid. Does not hydrolyze other phospholipids, like phosphatidylserine (PS), phosphatidylcholine (PC) and phosphatidylethanolamine (PE) or triacylglycerol (TG). This chain is Lipase member H (Liph), found in Mus musculus (Mouse).